Here is a 60-residue protein sequence, read N- to C-terminus: Ixodegrin-like peptide (60 aa).

The signal sequence occupies residues methionine 1–alanine 21. Positions arginine 49–aspartate 51 match the Cell attachment site motif.

This sequence belongs to the ixodegrin family. Contains 3 disulfide bonds. Expressed in salivary glands.

It is found in the secreted. Tick salivary platelet aggregation inhibitor that plays an important part in the anti-hemostatic strategy of ticks. Inhibits platelet aggregation induced by ADP, thrombin and thromboxane A2 (TXA2). Blocks platelet adhesion to soluble collagen (most probably through the binding to alpha-2/beta-1 integrin (ITGA2/ITGB1)) and binds to purified glycoprotein IIb/IIIa (ITGA2B/ITGB3) in a dose-dependent manner. In vivo, reduces thrombus weight effectively in a rat arteriovenous shunt model and inhibits thrombosis in a carrageenan-induced mouse tail thrombosis model. The polypeptide is Ixodegrin-like peptide (Ixodes scapularis (Black-legged tick)).